Reading from the N-terminus, the 197-residue chain is Putative carbonic anhydrase YvdA (197 aa).

Positions 41, 43, 99, and 102 each coordinate Zn(2+).

This sequence belongs to the beta-class carbonic anhydrase family. Zn(2+) is required as a cofactor.

It carries out the reaction hydrogencarbonate + H(+) = CO2 + H2O. Functionally, reversible hydration of carbon dioxide. In Bacillus subtilis (strain 168), this protein is Putative carbonic anhydrase YvdA (yvdA).